We begin with the raw amino-acid sequence, 66 residues long: DNA-directed RNA polymerase subunit omega (66 aa).

It belongs to the RNA polymerase subunit omega family. As to quaternary structure, the RNAP catalytic core consists of 2 alpha, 1 beta, 1 beta' and 1 omega subunit. When a sigma factor is associated with the core the holoenzyme is formed, which can initiate transcription.

The catalysed reaction is RNA(n) + a ribonucleoside 5'-triphosphate = RNA(n+1) + diphosphate. In terms of biological role, promotes RNA polymerase assembly. Latches the N- and C-terminal regions of the beta' subunit thereby facilitating its interaction with the beta and alpha subunits. The protein is DNA-directed RNA polymerase subunit omega of Clostridium botulinum (strain Alaska E43 / Type E3).